A 237-amino-acid chain; its full sequence is 1-(5-phosphoribosyl)-5-[(5-phosphoribosylamino)methylideneamino] imidazole-4-carboxamide isomerase (237 aa).

Catalysis depends on Asp-8, which acts as the Proton acceptor. Asp-129 functions as the Proton donor in the catalytic mechanism.

This sequence belongs to the HisA/HisF family.

It localises to the cytoplasm. The catalysed reaction is 1-(5-phospho-beta-D-ribosyl)-5-[(5-phospho-beta-D-ribosylamino)methylideneamino]imidazole-4-carboxamide = 5-[(5-phospho-1-deoxy-D-ribulos-1-ylimino)methylamino]-1-(5-phospho-beta-D-ribosyl)imidazole-4-carboxamide. It participates in amino-acid biosynthesis; L-histidine biosynthesis; L-histidine from 5-phospho-alpha-D-ribose 1-diphosphate: step 4/9. The chain is 1-(5-phosphoribosyl)-5-[(5-phosphoribosylamino)methylideneamino] imidazole-4-carboxamide isomerase from Clostridium botulinum (strain Alaska E43 / Type E3).